Reading from the N-terminus, the 455-residue chain is Probable glycine dehydrogenase (decarboxylating) subunit 1 (455 aa).

Belongs to the GcvP family. N-terminal subunit subfamily. The glycine cleavage system is composed of four proteins: P, T, L and H. In this organism, the P 'protein' is a heterodimer of two subunits.

The catalysed reaction is N(6)-[(R)-lipoyl]-L-lysyl-[glycine-cleavage complex H protein] + glycine + H(+) = N(6)-[(R)-S(8)-aminomethyldihydrolipoyl]-L-lysyl-[glycine-cleavage complex H protein] + CO2. The glycine cleavage system catalyzes the degradation of glycine. The P protein binds the alpha-amino group of glycine through its pyridoxal phosphate cofactor; CO(2) is released and the remaining methylamine moiety is then transferred to the lipoamide cofactor of the H protein. In Saccharolobus islandicus (strain M.16.27) (Sulfolobus islandicus), this protein is Probable glycine dehydrogenase (decarboxylating) subunit 1.